The following is a 388-amino-acid chain: Succinate--CoA ligase [ADP-forming] subunit beta (388 aa).

The region spanning 9 to 244 (KQIFAEYQLP…PSQEDPREAL (236 aa)) is the ATP-grasp domain. Residues Lys-46, 53–55 (GRG), Glu-99, Ser-102, and Glu-107 each bind ATP. The Mg(2+) site is built by Asn-199 and Asp-213. Residues Asn-264 and 321–323 (GIV) each bind substrate.

This sequence belongs to the succinate/malate CoA ligase beta subunit family. Heterotetramer of two alpha and two beta subunits. It depends on Mg(2+) as a cofactor.

It catalyses the reaction succinate + ATP + CoA = succinyl-CoA + ADP + phosphate. The catalysed reaction is GTP + succinate + CoA = succinyl-CoA + GDP + phosphate. Its pathway is carbohydrate metabolism; tricarboxylic acid cycle; succinate from succinyl-CoA (ligase route): step 1/1. Succinyl-CoA synthetase functions in the citric acid cycle (TCA), coupling the hydrolysis of succinyl-CoA to the synthesis of either ATP or GTP and thus represents the only step of substrate-level phosphorylation in the TCA. The beta subunit provides nucleotide specificity of the enzyme and binds the substrate succinate, while the binding sites for coenzyme A and phosphate are found in the alpha subunit. The sequence is that of Succinate--CoA ligase [ADP-forming] subunit beta from Pasteurella multocida (strain Pm70).